The primary structure comprises 235 residues: Octanoyltransferase (235 aa).

In terms of domain architecture, BPL/LPL catalytic spans 37–220; that stretch reads AGGPDTLLLL…AVNDALDGWL (184 aa). Residues 78 to 85, 150 to 152, and 163 to 165 contribute to the substrate site; these read RGGKITWH, AIG, and GFA. The Acyl-thioester intermediate role is filled by Cys-181.

Belongs to the LipB family.

It is found in the cytoplasm. The catalysed reaction is octanoyl-[ACP] + L-lysyl-[protein] = N(6)-octanoyl-L-lysyl-[protein] + holo-[ACP] + H(+). The protein operates within protein modification; protein lipoylation via endogenous pathway; protein N(6)-(lipoyl)lysine from octanoyl-[acyl-carrier-protein]: step 1/2. Functionally, catalyzes the transfer of endogenously produced octanoic acid from octanoyl-acyl-carrier-protein onto the lipoyl domains of lipoate-dependent enzymes. Lipoyl-ACP can also act as a substrate although octanoyl-ACP is likely to be the physiological substrate. The protein is Octanoyltransferase of Mycobacterium leprae (strain Br4923).